We begin with the raw amino-acid sequence, 201 residues long: MKWCRLSIILMSLILLAGCMPLRQPSPSADPQQTWQERQFALQEIEDWNLSGRLAINAIKEAWTGTLRWTQRGDEFKILWLFPLGQGSVELYGNPDRVTLRAPKEEPMIATSAEELLGTRLGWSLPVSGLRYWLLGLPAPGLPVVKSSLDSFGRLLRLSQGGWQIRYLDYKWIENFALPGKIFLEHPKLRLRLVIDHWQLG.

The first 18 residues, 1-18 (MKWCRLSIILMSLILLAG), serve as a signal peptide directing secretion. A lipid anchor (N-palmitoyl cysteine) is attached at cysteine 19. Cysteine 19 carries S-diacylglycerol cysteine lipidation.

It belongs to the LolB family. As to quaternary structure, monomer.

It is found in the cell outer membrane. Its function is as follows. Plays a critical role in the incorporation of lipoproteins in the outer membrane after they are released by the LolA protein. This chain is Outer-membrane lipoprotein LolB, found in Nitrosococcus oceani (strain ATCC 19707 / BCRC 17464 / JCM 30415 / NCIMB 11848 / C-107).